A 353-amino-acid chain; its full sequence is GSLKRPEDLLGEFELRLLHMFGLKRRPSPGKDVVIPPYMLDLYRLHAGQQLGYPLERAACRANTVCSFHHEEVLEELPETSGKTARRFFFNLTSIPNEESVTSAELQIFPGEQVHEAFESNSSYHHRINIYEIMKPATATSKDPVTRLLDTRLVHHNASKWESSDVTPAVLRWIAHGQPNHGFVVEVVHLDKENSASKRHVRISRSLHQDEDSWSQLRPLLVTFGHDGKGHPLHKREKRQAKHKQRKRHKYSCKRHPLYVDFNDVGWNDWIVAPPGYSAFYCHGECPFPLADHLNSTNHAIVQTLVNSVNSKIPKACCVPTELSAISMLYLDENEKVVLKNYQDMVVEGCGCR.

The propeptide occupies 1 to 239 (GSLKRPEDLL…GHPLHKREKR (239 aa)). N-linked (GlcNAc...) asparagine glycosylation is found at Asn-91, Asn-121, and Asn-157. The segment at 228–248 (GKGHPLHKREKRQAKHKQRKR) is disordered. Over residues 231-248 (HPLHKREKRQAKHKQRKR) the composition is skewed to basic residues. Cystine bridges form between Cys-253–Cys-318, Cys-282–Cys-350, and Cys-286–Cys-352. N-linked (GlcNAc...) asparagine glycosylation occurs at Asn-295.

Belongs to the TGF-beta family. As to quaternary structure, homodimer; disulfide-linked.

Its subcellular location is the secreted. Functionally, negatively regulates the structure and function of the limb apical ectodermal ridge. This Gallus gallus (Chicken) protein is Bone morphogenetic protein 2 (BMP2).